A 506-amino-acid polypeptide reads, in one-letter code: Glutamate--tRNA ligase (506 aa).

A 'HIGH' region motif is present at residues 24 to 34 (PSPTGLQHIGG). The Zn(2+) site is built by cysteine 121, cysteine 123, cysteine 148, and histidine 150. Residues 266-270 (KLSKR) carry the 'KMSKS' region motif. Lysine 269 serves as a coordination point for ATP.

This sequence belongs to the class-I aminoacyl-tRNA synthetase family. Glutamate--tRNA ligase type 1 subfamily. In terms of assembly, monomer. Zn(2+) is required as a cofactor.

The protein localises to the cytoplasm. It carries out the reaction tRNA(Glu) + L-glutamate + ATP = L-glutamyl-tRNA(Glu) + AMP + diphosphate. Its function is as follows. Catalyzes the attachment of glutamate to tRNA(Glu) in a two-step reaction: glutamate is first activated by ATP to form Glu-AMP and then transferred to the acceptor end of tRNA(Glu). In Borrelia recurrentis (strain A1), this protein is Glutamate--tRNA ligase.